The following is a 908-amino-acid chain: Protein translocase subunit SecA (908 aa).

ATP is bound by residues Q90, G108–T112, and D503. Residues A846 to P864 show a composition bias toward low complexity. The segment at A846–G884 is disordered. 4 residues coordinate Zn(2+): C892, C894, C903, and H904.

This sequence belongs to the SecA family. In terms of assembly, monomer and homodimer. Part of the essential Sec protein translocation apparatus which comprises SecA, SecYEG and auxiliary proteins SecDF-YajC and YidC. It depends on Zn(2+) as a cofactor.

The protein resides in the cell inner membrane. The protein localises to the cytoplasm. The catalysed reaction is ATP + H2O + cellular proteinSide 1 = ADP + phosphate + cellular proteinSide 2.. Its function is as follows. Part of the Sec protein translocase complex. Interacts with the SecYEG preprotein conducting channel. Has a central role in coupling the hydrolysis of ATP to the transfer of proteins into and across the cell membrane, serving both as a receptor for the preprotein-SecB complex and as an ATP-driven molecular motor driving the stepwise translocation of polypeptide chains across the membrane. The chain is Protein translocase subunit SecA from Cereibacter sphaeroides (strain ATCC 17029 / ATH 2.4.9) (Rhodobacter sphaeroides).